Reading from the N-terminus, the 382-residue chain is Lactaldehyde reductase (382 aa).

Residues aspartate 38, asparagine 70, glycine 97–serine 98, threonine 139–threonine 143, asparagine 150, lysine 161, and methionine 180–methionine 184 contribute to the NAD(+) site. 4 residues coordinate Fe cation: aspartate 195, histidine 199, histidine 262, and histidine 276.

This sequence belongs to the iron-containing alcohol dehydrogenase family. As to quaternary structure, homodimer. It depends on Fe cation as a cofactor.

It catalyses the reaction (R)-propane-1,2-diol + NAD(+) = (R)-lactaldehyde + NADH + H(+). The enzyme catalyses (S)-propane-1,2-diol + NAD(+) = (S)-lactaldehyde + NADH + H(+). It functions in the pathway carbohydrate degradation; L-fucose degradation. The chain is Lactaldehyde reductase (fucO) from Escherichia coli O157:H7.